A 248-amino-acid polypeptide reads, in one-letter code: Isoprenyl transferase (248 aa).

Asp-23 is an active-site residue. Asp-23 contacts Mg(2+). Substrate is bound by residues 24–27 (GNGR), Trp-28, Arg-36, His-40, and 68–70 (STE). Asn-71 acts as the Proton acceptor in catalysis. Substrate-binding positions include Trp-72, Arg-74, Arg-185, and 191 to 193 (RIS). Glu-204 contacts Mg(2+).

It belongs to the UPP synthase family. As to quaternary structure, homodimer. Mg(2+) is required as a cofactor.

Its function is as follows. Catalyzes the condensation of isopentenyl diphosphate (IPP) with allylic pyrophosphates generating different type of terpenoids. The protein is Isoprenyl transferase of Neisseria meningitidis serogroup B (strain ATCC BAA-335 / MC58).